Consider the following 117-residue polypeptide: Glycine cleavage system H-like protein (117 aa).

One can recognise a Lipoyl-binding domain in the interval 21–103 (IVKLGLSSQM…ESEGWFVVLQ (83 aa)). At K62 the chain carries N6-lipoyllysine.

It belongs to the GcvH family. (R)-lipoate serves as cofactor.

The chain is Glycine cleavage system H-like protein from Chlamydia trachomatis serovar D (strain ATCC VR-885 / DSM 19411 / UW-3/Cx).